Reading from the N-terminus, the 408-residue chain is Na(+)-translocating NADH-quinone reductase subunit F (408 aa).

A helical transmembrane segment spans residues 4-24 (IYLGVGMFIAIVLALVLIIMF). The 2Fe-2S ferredoxin-type domain maps to 33 to 127 (GEVTISINGD…DMDIELPEEI (95 aa)). 4 residues coordinate [2Fe-2S] cluster: C70, C76, C79, and C111. One can recognise an FAD-binding FR-type domain in the interval 130-270 (IKKWDCEVIS…SGPFGEFFAK (141 aa)).

Belongs to the NqrF family. Composed of six subunits; NqrA, NqrB, NqrC, NqrD, NqrE and NqrF. It depends on [2Fe-2S] cluster as a cofactor. FAD is required as a cofactor.

The protein resides in the cell inner membrane. The catalysed reaction is a ubiquinone + n Na(+)(in) + NADH + H(+) = a ubiquinol + n Na(+)(out) + NAD(+). Functionally, NQR complex catalyzes the reduction of ubiquinone-1 to ubiquinol by two successive reactions, coupled with the transport of Na(+) ions from the cytoplasm to the periplasm. The first step is catalyzed by NqrF, which accepts electrons from NADH and reduces ubiquinone-1 to ubisemiquinone by a one-electron transfer pathway. The polypeptide is Na(+)-translocating NADH-quinone reductase subunit F (Pseudoalteromonas atlantica (strain T6c / ATCC BAA-1087)).